Reading from the N-terminus, the 1143-residue chain is Condensin-2 complex subunit G2 (1143 aa).

At Ser-30 the chain carries Phosphoserine. The stretch at 460–498 (LLPALRYSLHDNSEKVRVAFVDMLLKIKAVRAAKFWKIC) is one HEAT repeat. Thr-805 and Thr-1119 each carry phosphothreonine.

In terms of assembly, component of the condensin-2 complex, which contains the SMC2 and SMC4 heterodimer, and 3 non SMC subunits that probably regulate the complex: NCAPH2, NCAPD3 and NCAPG2.

It is found in the nucleus. Its function is as follows. Regulatory subunit of the condensin-2 complex, a complex which establishes mitotic chromosome architecture and is involved in physical rigidity of the chromatid axis. This chain is Condensin-2 complex subunit G2 (NCAPG2), found in Homo sapiens (Human).